The following is a 250-amino-acid chain: L-ascorbate peroxidase 1, cytosolic (250 aa).

Catalysis depends on His42, which acts as the Proton acceptor. The tract at residues 113-137 (VPFHPGREDKPAPPPEGRLPDATKG) is disordered. A heme b-binding site is contributed by His163. K(+) is bound by residues Thr164, Thr180, Asn182, and Asp187.

It belongs to the peroxidase family. Ascorbate peroxidase subfamily. It depends on heme b as a cofactor. As to expression, expressed in roots, aerial vegetative parts and reproductive organs. Expressed in roots, leaves, stems and flowers.

It is found in the cytoplasm. The enzyme catalyses L-ascorbate + H2O2 = L-dehydroascorbate + 2 H2O. Inhibited by p-chloromercuriphenylsulfonic acid (CMPSA). Its function is as follows. Plays a key role in hydrogen peroxide removal. The chain is L-ascorbate peroxidase 1, cytosolic from Oryza sativa subsp. japonica (Rice).